We begin with the raw amino-acid sequence, 367 residues long: Phosphoribosylaminoimidazole-succinocarboxamide synthase (367 aa).

This sequence belongs to the SAICAR synthetase family.

It carries out the reaction 5-amino-1-(5-phospho-D-ribosyl)imidazole-4-carboxylate + L-aspartate + ATP = (2S)-2-[5-amino-1-(5-phospho-beta-D-ribosyl)imidazole-4-carboxamido]succinate + ADP + phosphate + 2 H(+). It functions in the pathway purine metabolism; IMP biosynthesis via de novo pathway; 5-amino-1-(5-phospho-D-ribosyl)imidazole-4-carboxamide from 5-amino-1-(5-phospho-D-ribosyl)imidazole-4-carboxylate: step 1/2. This chain is Phosphoribosylaminoimidazole-succinocarboxamide synthase, found in Shewanella pealeana (strain ATCC 700345 / ANG-SQ1).